The chain runs to 94 residues: Large ribosomal subunit protein bL27 (94 aa).

The propeptide occupies 1–9 (MLKLNLQFF).

Belongs to the bacterial ribosomal protein bL27 family. In terms of processing, the N-terminus is cleaved by ribosomal processing cysteine protease Prp.

The chain is Large ribosomal subunit protein bL27 from Staphylococcus epidermidis (strain ATCC 35984 / DSM 28319 / BCRC 17069 / CCUG 31568 / BM 3577 / RP62A).